A 261-amino-acid polypeptide reads, in one-letter code: Probable cyclic nucleotide phosphodiesterase PSM_A2567 (261 aa).

Fe cation contacts are provided by Asp-22, His-24, Asp-62, Asn-94, His-160, His-198, and His-200. AMP contacts are provided by residues His-24, Asp-62, and 94–95 (NH). His-200 is an AMP binding site.

This sequence belongs to the cyclic nucleotide phosphodiesterase class-III family. The cofactor is Fe(2+).

This chain is Probable cyclic nucleotide phosphodiesterase PSM_A2567, found in Pseudoalteromonas sp. (strain SM9913).